The chain runs to 238 residues: Uridylate kinase (238 aa).

12–15 (KLSG) contacts ATP. Position 54 (Gly54) interacts with UMP. The ATP site is built by Gly55 and Arg59. UMP contacts are provided by residues Asp74 and 135–142 (TGNPFFTT). The ATP site is built by Thr162, Tyr168, and Asp171.

This sequence belongs to the UMP kinase family. Homohexamer.

The protein localises to the cytoplasm. The enzyme catalyses UMP + ATP = UDP + ADP. The protein operates within pyrimidine metabolism; CTP biosynthesis via de novo pathway; UDP from UMP (UMPK route): step 1/1. Inhibited by UTP. In terms of biological role, catalyzes the reversible phosphorylation of UMP to UDP. The polypeptide is Uridylate kinase (Bordetella pertussis (strain Tohama I / ATCC BAA-589 / NCTC 13251)).